We begin with the raw amino-acid sequence, 353 residues long: Photosystem II protein D1 (353 aa).

Threonine 2 is modified (N-acetylthreonine). Threonine 2 is subject to Phosphothreonine. The next 3 membrane-spanning stretches (helical) occupy residues tyrosine 29 to serine 46, histidine 118 to leucine 133, and tryptophan 142 to alanine 156. Histidine 118 is a binding site for chlorophyll a. Tyrosine 126 serves as a coordination point for pheophytin a. Aspartate 170 and glutamate 189 together coordinate [CaMn4O5] cluster. Residues phenylalanine 197–leucine 218 traverse the membrane as a helical segment. Residue histidine 198 participates in chlorophyll a binding. Residues histidine 215 and serine 264 to phenylalanine 265 contribute to the a quinone site. Histidine 215 is a Fe cation binding site. Histidine 272 contacts Fe cation. A helical transmembrane segment spans residues phenylalanine 274–leucine 288. Positions 332, 333, 342, and 344 each coordinate [CaMn4O5] cluster. The propeptide occupies alanine 345–glycine 353.

This sequence belongs to the reaction center PufL/M/PsbA/D family. In terms of assembly, PSII is composed of 1 copy each of membrane proteins PsbA, PsbB, PsbC, PsbD, PsbE, PsbF, PsbH, PsbI, PsbJ, PsbK, PsbL, PsbM, PsbT, PsbX, PsbY, PsbZ, Psb30/Ycf12, at least 3 peripheral proteins of the oxygen-evolving complex and a large number of cofactors. It forms dimeric complexes. The cofactor is The D1/D2 heterodimer binds P680, chlorophylls that are the primary electron donor of PSII, and subsequent electron acceptors. It shares a non-heme iron and each subunit binds pheophytin, quinone, additional chlorophylls, carotenoids and lipids. D1 provides most of the ligands for the Mn4-Ca-O5 cluster of the oxygen-evolving complex (OEC). There is also a Cl(-1) ion associated with D1 and D2, which is required for oxygen evolution. The PSII complex binds additional chlorophylls, carotenoids and specific lipids.. Tyr-161 forms a radical intermediate that is referred to as redox-active TyrZ, YZ or Y-Z. In terms of processing, C-terminally processed by CTPA; processing is essential to allow assembly of the oxygen-evolving complex and thus photosynthetic growth.

The protein localises to the plastid. It localises to the chloroplast thylakoid membrane. The enzyme catalyses 2 a plastoquinone + 4 hnu + 2 H2O = 2 a plastoquinol + O2. Photosystem II (PSII) is a light-driven water:plastoquinone oxidoreductase that uses light energy to abstract electrons from H(2)O, generating O(2) and a proton gradient subsequently used for ATP formation. It consists of a core antenna complex that captures photons, and an electron transfer chain that converts photonic excitation into a charge separation. The D1/D2 (PsbA/PsbD) reaction center heterodimer binds P680, the primary electron donor of PSII as well as several subsequent electron acceptors. The polypeptide is Photosystem II protein D1 (Calycanthus floridus var. glaucus (Eastern sweetshrub)).